The following is a 244-amino-acid chain: 1-(5-phosphoribosyl)-5-[(5-phosphoribosylamino)methylideneamino] imidazole-4-carboxamide isomerase (244 aa).

D9 acts as the Proton acceptor in catalysis. The active-site Proton donor is the D131.

Belongs to the HisA/HisF family.

Its subcellular location is the cytoplasm. The catalysed reaction is 1-(5-phospho-beta-D-ribosyl)-5-[(5-phospho-beta-D-ribosylamino)methylideneamino]imidazole-4-carboxamide = 5-[(5-phospho-1-deoxy-D-ribulos-1-ylimino)methylamino]-1-(5-phospho-beta-D-ribosyl)imidazole-4-carboxamide. Its pathway is amino-acid biosynthesis; L-histidine biosynthesis; L-histidine from 5-phospho-alpha-D-ribose 1-diphosphate: step 4/9. The sequence is that of 1-(5-phosphoribosyl)-5-[(5-phosphoribosylamino)methylideneamino] imidazole-4-carboxamide isomerase from Campylobacter jejuni subsp. jejuni serotype O:6 (strain 81116 / NCTC 11828).